The chain runs to 367 residues: MTDAPELLKGPLEDRHRELGANFAEFGGWLMPVSYAGTVSEHSATRNAVGLFDVSHLGKALVRGPGAAQFVNSVLTNDLGRIRPGKAQYTLCCSESGGVIDDLIAYYVDDDEIFLVSNAANTAAVVDALQAVVPAGLTIINQHRSHAVLAVQGPRSTDVLGELGLPTGIDYMGYVDASYAGVPVRVCRTGYTGEQGYELLPPWESADVVFDALVAAVVDARGEPAGLGARDTLRTEMGYPLYGHELSLDISPLQARCGWAIGWKKDAFLGRDALLAEKAAGPRRLLRGLRMAGRGVLRPGLTVCAGDIPIGVTTSGTFSPTLQVGVALALIDSEAAVQDGQQIIVDVRGRAVECEVVRPPFIEVKTR.

Belongs to the GcvT family. The glycine cleavage system is composed of four proteins: P, T, L and H.

The catalysed reaction is N(6)-[(R)-S(8)-aminomethyldihydrolipoyl]-L-lysyl-[protein] + (6S)-5,6,7,8-tetrahydrofolate = N(6)-[(R)-dihydrolipoyl]-L-lysyl-[protein] + (6R)-5,10-methylene-5,6,7,8-tetrahydrofolate + NH4(+). The glycine cleavage system catalyzes the degradation of glycine. The chain is Aminomethyltransferase from Mycobacterium leprae (strain Br4923).